We begin with the raw amino-acid sequence, 1210 residues long: uncharacterized protein (1210 aa).

To E.coli molybdate metabolism regulator (MolR).

This is an uncharacterized protein from Escherichia coli (strain K12).